Consider the following 241-residue polypeptide: Carboxy-S-adenosyl-L-methionine synthase (241 aa).

S-adenosyl-L-methionine contacts are provided by residues Y38, 63–65 (GCS), 88–89 (DN), 116–117 (DI), N131, and R198.

Belongs to the class I-like SAM-binding methyltransferase superfamily. Cx-SAM synthase family. Homodimer.

It carries out the reaction prephenate + S-adenosyl-L-methionine = carboxy-S-adenosyl-L-methionine + 3-phenylpyruvate + H2O. In terms of biological role, catalyzes the conversion of S-adenosyl-L-methionine (SAM) to carboxy-S-adenosyl-L-methionine (Cx-SAM). In Histophilus somni (strain 129Pt) (Haemophilus somnus), this protein is Carboxy-S-adenosyl-L-methionine synthase.